Consider the following 135-residue polypeptide: Protein PsiE homolog (135 aa).

Transmembrane regions (helical) follow at residues 20 to 40, 54 to 74, 82 to 102, and 107 to 127; these read VGLIMLAAILVVFLVKETIHL, YMLIEGIVIYFLYFEFIALIV, HFPLRYFIYIGITAIIRLIIV, and PIDTLIYSGSILVLVVTLYLA.

This sequence belongs to the PsiE family.

Its subcellular location is the cell inner membrane. This Yersinia pseudotuberculosis serotype IB (strain PB1/+) protein is Protein PsiE homolog.